We begin with the raw amino-acid sequence, 663 residues long: Polyunsaturated fatty acid lipoxygenase ALOX15 (663 aa).

The PLAT domain maps to 2–115 (GLYRVRVSTG…ILSLPEGTGR (114 aa)). Residues 116–663 (TVVDDPQGLF…PSLVENSVAI (548 aa)) enclose the Lipoxygenase domain. The Fe cation site is built by His-361, His-366, His-541, His-545, and Ile-663.

Belongs to the lipoxygenase family. As to quaternary structure, interacts with PEBP1; in response to IL13/interleukin-13, prevents the interaction of PEBP1 with RAF1 to activate the ERK signaling cascade. Fe cation is required as a cofactor. As to expression, detected in tracheal epithelium.

It is found in the cytoplasm. The protein resides in the cytosol. Its subcellular location is the cell membrane. It localises to the lipid droplet. It catalyses the reaction (5Z,8Z,11Z,14Z)-eicosatetraenoate + O2 = (12S)-hydroperoxy-(5Z,8Z,10E,14Z)-eicosatetraenoate. It carries out the reaction (5Z,8Z,11Z,14Z)-eicosatetraenoate + O2 = (15S)-hydroperoxy-(5Z,8Z,11Z,13E)-eicosatetraenoate. The catalysed reaction is (9Z,12Z)-octadecadienoate + O2 = (13S)-hydroperoxy-(9Z,11E)-octadecadienoate. The enzyme catalyses (5Z,8Z,11Z,14Z)-eicosatetraenoate + 2 O2 = (14R,15S)-dihydroperoxy-(5Z,8Z,10E,12E)-eicosatetraenoate. It catalyses the reaction (5Z,8Z,11Z,14Z)-eicosatetraenoate + 2 O2 = (8S,15S)-dihydroperoxy-(5Z,9E,11Z,13E)-eicosatetraenoate. It carries out the reaction (14S,15R)-epoxy-(5Z,8Z,11Z)-eicosatrienoate + O2 = (8S)-hydroperoxy-(14S,15R)-epoxy-(5Z,9E,11Z)-eicosatrienoate. The catalysed reaction is (14S,15R)-epoxy-(5Z,8Z,11Z)-eicosatrienoate + O2 = (12S)-hydroperoxy-(14S,15R)-epoxy-(5Z,8Z,10E)-eicosatrienoate. The enzyme catalyses (14R,15S)-epoxy-(5Z,8Z,11Z)-eicosatrienoate + O2 = (5S)-hydroperoxy-(14R,15S)-epoxy-(6E,8Z,11Z)-eicosatrienoate. It catalyses the reaction (14R,15S)-epoxy-(5Z,8Z,11Z)-eicosatrienoate + O2 = (12S)-hydroperoxy-(14R,15S)-epoxy-(5Z,8Z,10E)-eicosatrienoate. It carries out the reaction (15R)-hydroperoxy-(5Z,8Z,11Z,13E)-eicosatetraenoate = 15-oxo-(5Z,8Z,11Z,13E)-eicosatetraenoate + H2O. The catalysed reaction is (15S)-hydroperoxy-(5Z,8Z,11Z,13E)-eicosatetraenoate = (14S,15S)-epoxy-(5Z,8Z,10E,12E)-eicosatetraenoate + H2O. The enzyme catalyses (12S)-hydroperoxy-(5Z,8Z,10E,14Z)-eicosatetraenoate = (8S)-hydroxy-(11S,12S)-epoxy-(5Z,9E,14Z)-eicosatrienoate. It catalyses the reaction (4Z,7Z,10Z,13Z,16Z)-docosapentaenoate + O2 = 14-hydroperoxy-(4Z,7Z,10Z,12E,16Z)-docosapentaenoate. It carries out the reaction (7Z,10Z,13Z,16Z,19Z)-docosapentaenoate + O2 = 14-hydroperoxy-(7Z,10Z,12E,16Z,19Z)-docosapentaenoate. The catalysed reaction is (4Z,7Z,10Z,13Z,16Z,19Z)-docosahexaenoate + O2 = (14S)-hydroperoxy-(4Z,7Z,10Z,12E,16Z,19Z)-docosahexaenoate. The enzyme catalyses (4Z,7Z,10Z,13Z,16Z,19Z)-docosahexaenoate + O2 = (17S)-hydroperoxy-(4Z,7Z,10Z,13Z,15E,19Z)-docosahexaenoate. It catalyses the reaction (7S)-hydroperoxy-(4Z,8E,10Z,13Z,16Z,19Z)-docosahexaenoate + O2 = (7S,14S)-dihydroperoxy-(4Z,8E,10Z,12E,16Z,19Z)-docosahexaenoate. It carries out the reaction (7S)-hydroperoxy-(4Z,8E,10Z,13Z,16Z,19Z)-docosahexaenoate + O2 = (7S,17S)-dihydroperoxy-(4Z,8E,10Z,13Z,15E,19Z)-docosahexaenoate. The catalysed reaction is (4Z,7Z,10Z,13Z,16Z,19Z)-docosahexaenoate + O2 = (11S)-hydroperoxy-(4Z,7Z,9E,13Z,16Z,19Z)-docosahexaenoate. The enzyme catalyses N-(5Z,8Z,11Z,14Z)-eicosatetraenoyl-taurine + O2 = N-(12S)-hydroperoxy-(5Z,8Z,10E,14Z)-eicosatetraenoyl-taurine. It catalyses the reaction N-(5Z,8Z,11Z,14Z)-eicosatetraenoyl-gamma-aminobutanoate + O2 = N-(12S)-hydroperoxy-(5Z,8Z,10E,14Z)-eicosatetraenoyl-gamma-aminobutanoate. It carries out the reaction N-(5Z,8Z,11Z,14Z)-eicosatetraenoyl-glycine + O2 = N-(12S)-hydroperoxy-(5Z,8Z,10E,14Z)-eicosatetraenoyl-glycine. The catalysed reaction is N-(5Z,8Z,11Z,14Z)-eicosatetraenoyl-L-alanine + O2 = N-(12S)-hydroperoxy-(5Z,8Z,10E,14Z)-eicosatetraenoyl-alanine. The enzyme catalyses N-(5Z,8Z,11Z,14Z)-eicosatetraenoyl-taurine + O2 = N-(15S)-hydroperoxy-(5Z,8Z,11Z,13E)-eicosatetraenoyl-taurine. It catalyses the reaction N-(5Z,8Z,11Z,14Z)-eicosatetraenoyl-gamma-aminobutanoate + O2 = N-(15S)-hydroperoxy-(5Z,8Z,11Z,13E)-eicosatetraenoyl-gamma-aminobutanoate. It carries out the reaction N-(5Z,8Z,11Z,14Z)-eicosatetraenoyl-glycine + O2 = N-(15S)-hydroperoxy-(5Z,8Z,11Z,13E)-eicosatetraenoyl-glycine. The catalysed reaction is N-(5Z,8Z,11Z,14Z)-eicosatetraenoyl-L-alanine + O2 = N-(15S)-hydroperoxy-(5Z,8Z,11Z,13E)-eicosatetraenoyl-alanine. The protein operates within lipid metabolism; hydroperoxy eicosatetraenoic acid biosynthesis. Functionally, non-heme iron-containing dioxygenase that catalyzes the stereo-specific peroxidation of free and esterified polyunsaturated fatty acids generating a spectrum of bioactive lipid mediators. It inserts peroxyl groups at C12 or C15 of arachidonate ((5Z,8Z,11Z,14Z)-eicosatetraenoate) producing both 12-hydroperoxyeicosatetraenoate/12-HPETE and 15-hydroperoxyeicosatetraenoate/15-HPETE. It may then act on 12-HPETE to produce hepoxilins, which may show pro-inflammatory properties. Can also peroxidize linoleate ((9Z,12Z)-octadecadienoate) to 13-hydroperoxyoctadecadienoate. May participate in the sequential oxidations of DHA ((4Z,7Z,10Z,13Z,16Z,19Z)-docosahexaenoate) to generate specialized pro-resolving mediators (SPMs)like resolvin D5 ((7S,17S)-diHPDHA) and (7S,14S)-diHPDHA, that actively down-regulate the immune response and have anti-aggregation properties with platelets. Can convert epoxy fatty acids to hydroperoxy-epoxides derivatives followed by an intramolecular nucleophilic substitution leading to the formation of monocyclic endoperoxides. Plays an important role during the maintenance of self-tolerance by peroxidizing membrane-bound phosphatidylethanolamine which can then signal the sorting process for clearance of apoptotic cells during inflammation and prevent an autoimmune response. In addition to its role in the immune and inflammatory responses, this enzyme may play a role in epithelial wound healing in the cornea through production of lipoxin A4 (LXA(4)) and docosahexaenoic acid-derived neuroprotectin D1 (NPD1; 10R,17S-HDHA), both lipid autacoids exhibit anti-inflammatory and neuroprotective properties. Furthermore, it may regulate actin polymerization which is crucial for several biological processes such as the phagocytosis of apoptotic cells. It is also implicated in the generation of endogenous ligands for peroxisome proliferator activated receptor (PPAR-gamma), hence modulating macrophage development and function. It may also exert a negative effect on skeletal development by regulating bone mass through this pathway. As well as participates in ER stress and downstream inflammation in adipocytes, pancreatic islets, and liver. Finally, it is also involved in the cellular response to IL13/interleukin-13. This is Polyunsaturated fatty acid lipoxygenase ALOX15 from Bos taurus (Bovine).